The chain runs to 89 residues: Small ribosomal subunit protein uS15 (89 aa).

The protein belongs to the universal ribosomal protein uS15 family. As to quaternary structure, part of the 30S ribosomal subunit. Forms a bridge to the 50S subunit in the 70S ribosome, contacting the 23S rRNA.

One of the primary rRNA binding proteins, it binds directly to 16S rRNA where it helps nucleate assembly of the platform of the 30S subunit by binding and bridging several RNA helices of the 16S rRNA. Its function is as follows. Forms an intersubunit bridge (bridge B4) with the 23S rRNA of the 50S subunit in the ribosome. This Desulforudis audaxviator (strain MP104C) protein is Small ribosomal subunit protein uS15.